Consider the following 431-residue polypeptide: Adenylosuccinate synthetase 2 (431 aa).

Residues 13-19 (GDEGKGK) and 41-43 (GHT) each bind GTP. Catalysis depends on Asp-14, which acts as the Proton acceptor. The Mg(2+) site is built by Asp-14 and Gly-41. Residues 14–17 (DEGK), 39–42 (NAGH), Thr-130, Arg-144, Gln-225, Thr-240, and Arg-304 each bind IMP. The active-site Proton donor is His-42. Residue 300-306 (SVTGRPR) coordinates substrate. Residues Arg-306, 332–334 (KLD), and 414–416 (STG) each bind GTP.

The protein belongs to the adenylosuccinate synthetase family. As to quaternary structure, homodimer. Mg(2+) is required as a cofactor.

It is found in the cytoplasm. The enzyme catalyses IMP + L-aspartate + GTP = N(6)-(1,2-dicarboxyethyl)-AMP + GDP + phosphate + 2 H(+). Its pathway is purine metabolism; AMP biosynthesis via de novo pathway; AMP from IMP: step 1/2. In terms of biological role, plays an important role in the de novo pathway of purine nucleotide biosynthesis. Catalyzes the first committed step in the biosynthesis of AMP from IMP. This chain is Adenylosuccinate synthetase 2, found in Chromobacterium violaceum (strain ATCC 12472 / DSM 30191 / JCM 1249 / CCUG 213 / NBRC 12614 / NCIMB 9131 / NCTC 9757 / MK).